Reading from the N-terminus, the 454-residue chain is Zinc finger protein 474 (454 aa).

The interval 48–85 is disordered; that stretch reads RGEKIKTNPRKNRPGTVILSKQSSRRIMSGSQPRPPVI. The segment covering 66 to 79 has biased composition (polar residues); that stretch reads LSKQSSRRIMSGSQ. The segment at 91–120 adopts a C2HC/C3H-type 1 zinc-finger fold; sequence GFRVCYICGREFGSQSLGIHEPQCLEKWRV. Zn(2+)-binding residues include Cys-95, Cys-98, His-110, and Cys-114. Residues 125 to 146 form a disordered region; sequence LPKHLRRPEPSKPPPFSGSGSY. 5 consecutive C2HC/C3H-type zinc fingers follow at residues 162–191, 218–247, 281–310, 352–381, and 425–454; these read QLLP…KVEG, RTVI…KWKV, QLVS…QPSG, PTIV…KWHN, and QLVP…KVAK. Residues Cys-166, Cys-169, His-181, Cys-185, Cys-222, Cys-225, His-237, and Cys-241 each coordinate Zn(2+). Positions 256–282 are disordered; the sequence is FRQPLPQKPQPLLTGQPKHAGPRQGQL. Positions 285, 288, 300, 304, 356, 359, 371, 375, 429, 432, 444, and 448 each coordinate Zn(2+). The segment at 299 to 345 is disordered; that stretch reads VHQRSCKAQPSGPKVQDLTLGSRGGLKESTNPKPQRNMAAPPVTDKP.

It depends on Zn(2+) as a cofactor.

The sequence is that of Zinc finger protein 474 (ZNF474) from Bos taurus (Bovine).